The primary structure comprises 381 residues: Erythronate-4-phosphate dehydrogenase (381 aa).

The substrate site is built by Ser-45 and Thr-66. NAD(+) contacts are provided by residues Asp-146, Thr-174, 205–207 (ASR), and Asp-231. Arg-207 is an active-site residue. Residue Glu-236 is part of the active site. Catalysis depends on His-253, which acts as the Proton donor. Gly-256 is an NAD(+) binding site. Tyr-257 provides a ligand contact to substrate.

This sequence belongs to the D-isomer specific 2-hydroxyacid dehydrogenase family. PdxB subfamily. Homodimer.

It localises to the cytoplasm. It carries out the reaction 4-phospho-D-erythronate + NAD(+) = (R)-3-hydroxy-2-oxo-4-phosphooxybutanoate + NADH + H(+). Its pathway is cofactor biosynthesis; pyridoxine 5'-phosphate biosynthesis; pyridoxine 5'-phosphate from D-erythrose 4-phosphate: step 2/5. In terms of biological role, catalyzes the oxidation of erythronate-4-phosphate to 3-hydroxy-2-oxo-4-phosphonooxybutanoate. The sequence is that of Erythronate-4-phosphate dehydrogenase from Stutzerimonas stutzeri (strain A1501) (Pseudomonas stutzeri).